We begin with the raw amino-acid sequence, 397 residues long: MSDVLKSSQERSRKRRLLLAQTLGLSSVDDLKKALGNAEDINSSRQLNSGGQREEEDGGASSSKKTPNEIIYRDSSTFLKGTQSSNPHNDYCQHFVDTGQRPQNFIRDVGLADRFEEYPKLRELIKLKDKLIQDTASAPMYLKADLKSLDVKTLGAKFDVILIEPPLEEYARAAPSVATVGGAPRVFWNWDDILNLDVGEIAAHRSFVFLWCGSSEGLDMGRNCLKKWGFRRCEDICWIRTNINKPGHSKQLEPKAVFQRTKEHCLMGIKGTVRRSTDGDFIHANVDIDLIISEEEEFGSFEKPIEIFHIIEHFCLGRRRLHLFGRDSSIRPGWLTVGPELTNSNFNSELYQTYFAEAPATGCTSRIELLRPKSPPPNSKVLRGRGRGFPRGRGRPR.

2 disordered regions span residues 37–67 (NAEDINSSRQLNSGGQREEEDGGASSSKKTP) and 368–397 (ELLRPKSPPPNSKVLRGRGRGFPRGRGRPR). Polar residues predominate over residues 40–51 (DINSSRQLNSGG). Positions 382 to 397 (LRGRGRGFPRGRGRPR) are enriched in basic residues.

This sequence belongs to the MT-A70-like family. As to quaternary structure, component of the WMM complex, a N6-methyltransferase complex composed of a catalytic subcomplex, named MAC, and of an associated subcomplex, named MACOM. The MAC subcomplex is composed of Ime4/Mettl3 and Mettl14. The MACOM subcomplex is composed of fl(2)d, Flacc/Xio, Hakai, vir, and, in some cases of nito.

Its subcellular location is the nucleus. Its function is as follows. Non-catalytic component of the WMM complex, a complex that mediates N6-methyladenosine (m6A) methylation of mRNAs, a modification that plays a role in the efficiency of mRNA splicing and is required for sex determination. In the heterodimer formed with Ime4/Mettl3, Mettl14 constitutes the RNA-binding scaffold that recognizes the substrate rather than the catalytic core. Required for sex determination and dosage compensation via Sxl alternative splicing: m6A methylation acts as a key regulator of Sxl pre-mRNA and promotes female-specific alternative splicing of Sxl, which determines female physiognomy. M6A methylation is also required for neuronal functions. This Drosophila melanogaster (Fruit fly) protein is N(6)-adenosine-methyltransferase non-catalytic subunit METTL14.